Reading from the N-terminus, the 338-residue chain is Replication factor C small subunit (338 aa).

53 to 60 (GPPGVGKT) contacts ATP.

It belongs to the activator 1 small subunits family. RfcS subfamily. As to quaternary structure, heteromultimer composed of small subunits (RfcS) and large subunits (RfcL).

Part of the RFC clamp loader complex which loads the PCNA sliding clamp onto DNA. This is Replication factor C small subunit from Methanosarcina mazei (strain ATCC BAA-159 / DSM 3647 / Goe1 / Go1 / JCM 11833 / OCM 88) (Methanosarcina frisia).